The primary structure comprises 227 residues: Eukaryotic translation initiation factor 4E-1 (227 aa).

Positions 1–52 are disordered; it reads MAEEHETRPPSAGRPPSSGRGRADDADEREEGEIADDDSGHAPPQANPAAPH. Over residues 9-20 the composition is skewed to low complexity; the sequence is PPSAGRPPSSGR. Acidic residues predominate over residues 25-37; sequence DADEREEGEIADD. EIF4G-binding stretches follow at residues 52-55 and 62-98; these read HPLE and FDNPQGKSKQATWGSSIRPIHTFSTVEDFWSLYNNIH. MRNA-binding positions include 70 to 75, Lys-102, and 120 to 121; these read KQATWG and WE. An intrachain disulfide couples Cys-125 to Cys-163. Positions 146–155 are EIF4G-binding; that stretch reads HTLLAMIGEQ. Residues 170 to 175 and 215 to 219 contribute to the mRNA site; these read RGKQER and KKMDK.

The protein belongs to the eukaryotic initiation factor 4E family. EIF4F is a multi-subunit complex, the composition of which varies with external and internal environmental conditions. It is composed of at least EIF4A, EIF4E and EIF4G. EIF4E is also known to interact with other partners. In higher plants two isoforms of EIF4F have been identified, named isoform EIF4F and isoform EIF(iso)4F. Isoform EIF4F has subunits p220 and p26, whereas isoform EIF(iso)4F has subunits p82 and p28. According to the redox status, the Cys-125-Cys-163 disulfide bridge may have a role in regulating protein function by affecting its ability to bind capped mRNA.

Its subcellular location is the nucleus. The protein resides in the cytoplasm. Functionally, component of the protein complex eIF4F, which is involved in the recognition of the mRNA cap, ATP-dependent unwinding of 5'-terminal secondary structure and recruitment of mRNA to the ribosome. Recognizes and binds the 7-methylguanosine-containing mRNA cap during an early step in the initiation of protein synthesis and facilitates ribosome binding by inducing the unwinding of the mRNAs secondary structures. This chain is Eukaryotic translation initiation factor 4E-1, found in Oryza sativa subsp. japonica (Rice).